A 68-amino-acid polypeptide reads, in one-letter code: Coiled-coil domain-containing protein 179 (68 aa).

A disordered region spans residues 11 to 68 (SQVNPEGPRQHHPSEVTERQLANKRIQNMQHLKKEKRRLNKRFSRPSPIPEPGLLWSS). Residues 18-28 (PRQHHPSEVTE) are compositionally biased toward basic and acidic residues. Residues 27-53 (TERQLANKRIQNMQHLKKEKRRLNKRF) adopt a coiled-coil conformation. The span at 41 to 54 (HLKKEKRRLNKRFS) shows a compositional bias: basic residues.

This Homo sapiens (Human) protein is Coiled-coil domain-containing protein 179 (CCDC179).